Here is a 166-residue protein sequence, read N- to C-terminus: Ureidoglycolate lyase (166 aa).

The protein belongs to the ureidoglycolate lyase family. Homodimer. Ni(2+) is required as a cofactor.

The enzyme catalyses (S)-ureidoglycolate = urea + glyoxylate. It participates in nitrogen metabolism; (S)-allantoin degradation. In terms of biological role, catalyzes the catabolism of the allantoin degradation intermediate (S)-ureidoglycolate, generating urea and glyoxylate. Involved in the utilization of allantoin as nitrogen source. This is Ureidoglycolate lyase from Rhizobium etli (strain CIAT 652).